The chain runs to 255 residues: 4-hydroxy-tetrahydrodipicolinate reductase (255 aa).

Residues 8–13 (GSTGRM), 88–90 (ATT), and 112–115 (SSNM) contribute to the NAD(+) site. H144 functions as the Proton donor/acceptor in the catalytic mechanism. A (S)-2,3,4,5-tetrahydrodipicolinate-binding site is contributed by H145. K148 acts as the Proton donor in catalysis. Residue 154–155 (GT) participates in (S)-2,3,4,5-tetrahydrodipicolinate binding.

This sequence belongs to the DapB family.

Its subcellular location is the cytoplasm. It catalyses the reaction (S)-2,3,4,5-tetrahydrodipicolinate + NAD(+) + H2O = (2S,4S)-4-hydroxy-2,3,4,5-tetrahydrodipicolinate + NADH + H(+). The enzyme catalyses (S)-2,3,4,5-tetrahydrodipicolinate + NADP(+) + H2O = (2S,4S)-4-hydroxy-2,3,4,5-tetrahydrodipicolinate + NADPH + H(+). It functions in the pathway amino-acid biosynthesis; L-lysine biosynthesis via DAP pathway; (S)-tetrahydrodipicolinate from L-aspartate: step 4/4. Its function is as follows. Catalyzes the conversion of 4-hydroxy-tetrahydrodipicolinate (HTPA) to tetrahydrodipicolinate. This is 4-hydroxy-tetrahydrodipicolinate reductase from Sulfurovum sp. (strain NBC37-1).